A 301-amino-acid polypeptide reads, in one-letter code: Heat shock factor protein HSF24 (301 aa).

The DNA-binding element occupies 7–101; sequence PAPFLLKTYQ…LLTAIRRRKT (95 aa). Disordered regions lie at residues 103-160 and 221-244; these read TSTP…DENE and GVKD…DEKG. The segment covering 107–142 has biased composition (low complexity); that stretch reads AGGKSVAAGASASPDNSGDDIGSSSTSSPDSKNPGS. Residues 233–243 are compositionally biased toward acidic residues; that stretch reads DNDDKEDDDEK.

This sequence belongs to the HSF family. As to quaternary structure, homotrimer. Post-translationally, exhibits temperature-dependent phosphorylation.

Its subcellular location is the nucleus. Functionally, DNA-binding protein that specifically binds heat shock promoter elements (HSE) and activates transcription. In Solanum peruvianum (Peruvian tomato), this protein is Heat shock factor protein HSF24 (HSF24).